We begin with the raw amino-acid sequence, 338 residues long: Cinnamoyl-CoA reductase 1 (338 aa).

Residues 22-28 (GAGGFIG), arginine 47, lysine 53, 73-74 (DV), 93-95 (VAS), tyrosine 165, lysine 169, 192-195 (PSMT), and serine 207 each bind NADP(+). An intrachain disulfide couples cysteine 158 to cysteine 166. Catalysis depends on lysine 169, which acts as the Proton donor.

Belongs to the NAD(P)-dependent epimerase/dehydratase family. Dihydroflavonol-4-reductase subfamily. As to quaternary structure, interacts with RAC1 in a GTP-dependent manner.

It localises to the cytoplasm. The catalysed reaction is (E)-cinnamaldehyde + NADP(+) + CoA = (E)-cinnamoyl-CoA + NADPH + H(+). The protein operates within aromatic compound metabolism; phenylpropanoid biosynthesis. Activated by the small GTPase RAC1. Involved in the latter stages of lignin biosynthesis. Catalyzes one of the last steps of monolignol biosynthesis, the conversion of cinnamoyl-CoAs into their corresponding cinnamaldehydes. Probably involved in the formation of lignin in defense responses. The polypeptide is Cinnamoyl-CoA reductase 1 (Oryza sativa subsp. japonica (Rice)).